We begin with the raw amino-acid sequence, 70 residues long: Conotoxin Im23.4 (70 aa).

The signal sequence occupies residues 1-22 (MIMRMTLTLFVLVVMTAASASG). Positions 23 to 30 (DALTEAKR) are excised as a propeptide. Cystine bridges form between cysteine 34–cysteine 41, cysteine 45–cysteine 53, and cysteine 54–cysteine 69.

The protein belongs to the conotoxin K superfamily. As to expression, expressed by the venom duct.

The protein resides in the secreted. Probable neurotoxin. The sequence is that of Conotoxin Im23.4 from Conus imperialis (Imperial cone).